Here is a 348-residue protein sequence, read N- to C-terminus: sn-glycerol-3-phosphate import ATP-binding protein UgpC (348 aa).

The region spanning 4 to 235 is the ABC transporter domain; it reads IQLSNIKKQY…PETTFVADFI (232 aa). 37 to 44 lines the ATP pocket; the sequence is GPSGCGKS.

It belongs to the ABC transporter superfamily. sn-glycerol-3-phosphate importer (TC 3.A.1.1.3) family. The complex is composed of two ATP-binding proteins (UgpC), two transmembrane proteins (UgpA and UgpE) and a solute-binding protein (UgpB).

It localises to the cell inner membrane. The catalysed reaction is sn-glycerol 3-phosphate(out) + ATP + H2O = sn-glycerol 3-phosphate(in) + ADP + phosphate + H(+). Its function is as follows. Part of the ABC transporter complex UgpBAEC involved in sn-glycerol-3-phosphate (G3P) import. Responsible for energy coupling to the transport system. The chain is sn-glycerol-3-phosphate import ATP-binding protein UgpC from Bartonella quintana (strain Toulouse) (Rochalimaea quintana).